Reading from the N-terminus, the 278-residue chain is MKKTQQKEIENVTNITGVRQIELWRRDDLQHPRLDEVAEEVPVALVYNGISHVVMMASPKDLEYFALGFSLSEGIIESPRDIFGMDVVPSCNGLEVQIELSSRRFMGLKERRRALAGRTGCGVCGVEQLNDIGKPVQPLPFTQTFDLNKLDDALRHLNDFQPVGQLTGCTHAAAWMLPSGELVGGHEDVGRHVALDKLLGRRSQEGESWQQGAVLVSSRASYEMVQKSAMCGVEILFAVSAATTLAVEVAERCNLTLVGFCKPGRATVYTHPQRLVHN.

The active-site Cysteine persulfide intermediate is the cysteine 121. 260 to 265 (FCKPGR) lines the Mo-bis(molybdopterin guanine dinucleotide) pocket.

The protein belongs to the FdhD family.

It localises to the cytoplasm. Functionally, required for formate dehydrogenase (FDH) activity. Acts as a sulfur carrier protein that transfers sulfur from IscS to the molybdenum cofactor prior to its insertion into FDH. The chain is Sulfur carrier protein FdhD from Escherichia coli O127:H6 (strain E2348/69 / EPEC).